We begin with the raw amino-acid sequence, 277 residues long: Inorganic pyrophosphatase (277 aa).

Arginine 80 contributes to the diphosphate binding site. The Mg(2+) site is built by aspartate 117, aspartate 122, and aspartate 154.

This sequence belongs to the PPase family. It depends on Mg(2+) as a cofactor.

The protein resides in the cytoplasm. The catalysed reaction is diphosphate + H2O = 2 phosphate + H(+). Involved in osmoadaptation. The sequence is that of Inorganic pyrophosphatase (IPP1) from Encephalitozoon cuniculi (strain GB-M1) (Microsporidian parasite).